The sequence spans 63 residues: MKANELKDKSVEQLNADLLDLLKAQFGLRMQNATGQLGKPSELKRVRRDIARIKTVLTEKGAK.

It belongs to the universal ribosomal protein uL29 family.

This Neisseria meningitidis serogroup C (strain 053442) protein is Large ribosomal subunit protein uL29.